A 237-amino-acid chain; its full sequence is Ribosomal RNA small subunit methyltransferase G (237 aa).

S-adenosyl-L-methionine-binding positions include Gly-78, Phe-83, 129–130 (AE), and Arg-148.

The protein belongs to the methyltransferase superfamily. RNA methyltransferase RsmG family.

It is found in the cytoplasm. In terms of biological role, specifically methylates the N7 position of a guanine in 16S rRNA. This chain is Ribosomal RNA small subunit methyltransferase G, found in Streptococcus pyogenes serotype M12 (strain MGAS2096).